The chain runs to 415 residues: Gamma-glutamyl phosphate reductase (415 aa).

The protein belongs to the gamma-glutamyl phosphate reductase family.

It localises to the cytoplasm. It carries out the reaction L-glutamate 5-semialdehyde + phosphate + NADP(+) = L-glutamyl 5-phosphate + NADPH + H(+). It participates in amino-acid biosynthesis; L-proline biosynthesis; L-glutamate 5-semialdehyde from L-glutamate: step 2/2. In terms of biological role, catalyzes the NADPH-dependent reduction of L-glutamate 5-phosphate into L-glutamate 5-semialdehyde and phosphate. The product spontaneously undergoes cyclization to form 1-pyrroline-5-carboxylate. The chain is Gamma-glutamyl phosphate reductase from Cutibacterium acnes (strain DSM 16379 / KPA171202) (Propionibacterium acnes).